We begin with the raw amino-acid sequence, 652 residues long: DNA ligase (652 aa).

NAD(+)-binding positions include 29–33, 78–79, and glutamate 107; these read DSQYD and SL. The N6-AMP-lysine intermediate role is filled by lysine 109. Positions 130, 164, 278, and 302 each coordinate NAD(+). The Zn(2+) site is built by cysteine 395, cysteine 398, cysteine 413, and cysteine 418. Positions 577–652 constitute a BRCT domain; that stretch reads STDAQLSGLT…IQDEDWLLNL (76 aa).

Belongs to the NAD-dependent DNA ligase family. LigA subfamily. Mg(2+) serves as cofactor. It depends on Mn(2+) as a cofactor.

It carries out the reaction NAD(+) + (deoxyribonucleotide)n-3'-hydroxyl + 5'-phospho-(deoxyribonucleotide)m = (deoxyribonucleotide)n+m + AMP + beta-nicotinamide D-nucleotide.. Its function is as follows. DNA ligase that catalyzes the formation of phosphodiester linkages between 5'-phosphoryl and 3'-hydroxyl groups in double-stranded DNA using NAD as a coenzyme and as the energy source for the reaction. It is essential for DNA replication and repair of damaged DNA. In Streptococcus agalactiae serotype V (strain ATCC BAA-611 / 2603 V/R), this protein is DNA ligase.